A 306-amino-acid polypeptide reads, in one-letter code: Mitochondrial brown fat uncoupling protein 1 (306 aa).

Topologically, residues 1–10 (MVGTTTTDVP) are mitochondrial intermembrane. A helical membrane pass occupies residues 11–32 (PTMGVKIFSAGVAACLADVITF). Solcar repeat units follow at residues 11–102 (PTMG…VQEF), 110–200 (PSLG…MKGA), and 209–294 (DDVP…LKGE). Residues 33-73 (PLDTAKVRQQIQGEFPITSGIRYKGVLGTITTLAKTEGPLK) are Mitochondrial matrix-facing. Lys56 provides a ligand contact to fatty acid 16:0. A helical transmembrane segment spans residues 74-96 (LYSGLPAGLQRQISFASLRIGLY). Topologically, residues 97-115 (DTVQEFFTSGEETPSLGSK) are mitochondrial intermembrane. Residues 116 to 132 (ISAGLTTGGVAVFIGQP) traverse the membrane as a helical segment. The Mitochondrial matrix portion of the chain corresponds to 133 to 177 (TEVVKVRLQAQSHLHGLKPRYTGTYNAYRIIATTESLTSLWKGTT). The chain crosses the membrane as a helical span at residues 178 to 194 (PNLLRNVIINCTELVTY). Topologically, residues 195–211 (DLMKGALVRNEILADDV) are mitochondrial intermembrane. The helical transmembrane segment at 212 to 231 (PCHFVSALIAGFCTTLLSSP) threads the bilayer. The Mitochondrial matrix portion of the chain corresponds to 232-265 (VDVVKTRFINSPPGQYASVPNCAMTMFTKEGPTA). At Cys253 the chain carries Cysteine sulfenic acid (-SOH). A helical transmembrane segment spans residues 266–288 (FFKGFVPSFLRLGSWNVIMFVCF). Residue Lys268 coordinates fatty acid 16:0. Topologically, residues 289–306 (EKLKGELMRSRQTVDCAT) are mitochondrial intermembrane.

Belongs to the mitochondrial carrier (TC 2.A.29) family. Most probably functions as a monomer. Binds one purine nucleotide per monomer. However, has also been suggested to function as a homodimer or a homotetramer. Tightly associates with cardiolipin in the mitochondrion inner membrane; may stabilize and regulate its activity. May undergo sulfenylation upon cold exposure. May increase the sensitivity of UCP1 thermogenic function to the activation by noradrenaline probably through structural effects. In terms of processing, may undergo ubiquitin-mediated proteasomal degradation. Brown adipose tissue.

Its subcellular location is the mitochondrion inner membrane. The enzyme catalyses H(+)(in) = H(+)(out). Has no constitutive proton transporter activity and has to be activated by long-chain fatty acids/LCFAs. Inhibited by purine nucleotides. Both purine nucleotides and LCFAs bind the cytosolic side of the transporter and directly compete to activate or inhibit it. Activated by noradrenaline and reactive oxygen species. Despite lacking canonical translational encoding for selenocysteine, a small pool of the protein has been observed to selectively incorporate selenocysteine at 'Cys-253'. Selenocysteine-modified protein is highly sensitive to redox modification and may constitute a pool of protein highly sensitive to activation by elevated levels of reactive oxygen species (ROS). Functionally, mitochondrial protein responsible for thermogenic respiration, a specialized capacity of brown adipose tissue and beige fat that participates in non-shivering adaptive thermogenesis to temperature and diet variations and more generally to the regulation of energy balance. Functions as a long-chain fatty acid/LCFA and proton symporter, simultaneously transporting one LCFA and one proton through the inner mitochondrial membrane. However, LCFAs remaining associated with the transporter via their hydrophobic tails, it results in an apparent transport of protons activated by LCFAs. Thereby, dissipates the mitochondrial proton gradient and converts the energy of substrate oxydation into heat instead of ATP. Regulates the production of reactive oxygen species/ROS by mitochondria. In Oryctolagus cuniculus (Rabbit), this protein is Mitochondrial brown fat uncoupling protein 1.